We begin with the raw amino-acid sequence, 279 residues long: Succinate dehydrogenase [ubiquinone] iron-sulfur subunit 1, mitochondrial (279 aa).

A mitochondrion-targeting transit peptide spans 1 to 28 (MASGLIGRLVGTKPSKLATAARLIPARW). One can recognise a 2Fe-2S ferredoxin-type domain in the interval 52-141 (FQIYRWNPDN…ETTITPLPHM (90 aa)). The [2Fe-2S] cluster site is built by C102, C107, and C122. Residues 184–214 (DRAKLDGMYECILCACCSTSCPSYWWNPESY) enclose the 4Fe-4S ferredoxin-type domain. [4Fe-4S] cluster contacts are provided by C194, C197, and C200. C204 lines the [3Fe-4S] cluster pocket. A ubiquinone is bound at residue W209. Positions 251 and 257 each coordinate [3Fe-4S] cluster. C261 contacts [4Fe-4S] cluster.

This sequence belongs to the succinate dehydrogenase/fumarate reductase iron-sulfur protein family. As to quaternary structure, component of complex II composed of eight subunits in plants: four classical SDH subunits SDH1, SDH2, SDH3 and SDH4 (a flavoprotein (FP), an iron-sulfur protein (IP), and a cytochrome b composed of a large and a small subunit.), as well as four subunits unknown in mitochondria from bacteria and heterotrophic eukaryotes. Requires [2Fe-2S] cluster as cofactor. It depends on [3Fe-4S] cluster as a cofactor. The cofactor is [4Fe-4S] cluster. As to expression, ubiquitous. Preferentially expressed in flowers and inflorescences.

It is found in the mitochondrion inner membrane. The enzyme catalyses a quinone + succinate = fumarate + a quinol. It functions in the pathway carbohydrate metabolism; tricarboxylic acid cycle; fumarate from succinate (eukaryal route): step 1/1. Functionally, iron-sulfur protein (IP) subunit of succinate dehydrogenase (SDH) that is involved in complex II of the mitochondrial electron transport chain and is responsible for transferring electrons from succinate to ubiquinone (coenzyme Q). The polypeptide is Succinate dehydrogenase [ubiquinone] iron-sulfur subunit 1, mitochondrial (SDH2-1) (Arabidopsis thaliana (Mouse-ear cress)).